The following is a 1003-amino-acid chain: Pumilio homolog 4 (1003 aa).

Residues 38–65 (QHRNQQSFGRERERDIDVHRSGSAPPTV) form a disordered region. Residues 46–57 (GRERERDIDVHR) show a composition bias toward basic and acidic residues. Ser-225 is subject to Phosphoserine. Over residues 285-300 (KNSPNTMLGSTMSSPV) the composition is skewed to polar residues. The tract at residues 285–328 (KNSPNTMLGSTMSSPVPRNRTPDSHLVGRSTASGLPPIGTRVGP) is disordered. Thr-305 is subject to Phosphothreonine. The PUM-HD domain occupies 644–984 (AEASLLEGFK…HIVARVEKLI (341 aa)). Pumilio repeat units lie at residues 664–699 (EIVGHVIEFSMDQYGSRFIQQKLETATDEEKNAIFP), 700–735 (EILPYGRTLMTDVFGNYVIQKFFEHGTTKQRKELAE), 736–771 (QVTGHVLALSLQMYGCRVIQKALEVVELEQQARMVK), 772–807 (ELDGSVMKCVHDQNGNHVIQKCIERLPQDWIQFIIS), 808–843 (SFYGKVLALSTHPYGCRVIQRVLEHIDDIETQRIIM), 845–880 (EIMDSVCTLAQDQYGNYVIQHIIQHGKPHERSEIIN), 881–916 (KLAGQIVKMSQQKFASNVVEKCLTFGGPEERQVLVN), and 917–958 (EMLG…LILS).

Its subcellular location is the cytoplasm. In terms of biological role, sequence-specific RNA-binding protein that regulates translation and mRNA stability by binding the 3'-UTR of target mRNAs. Binds the APUM-binding elements (APBEs) in the 3'-UTR mRNA sequence of CLV1, PNH, WUS and FAS2. The sequence is that of Pumilio homolog 4 (APUM4) from Arabidopsis thaliana (Mouse-ear cress).